The sequence spans 481 residues: MEVASQALGPLVTELYDVQAFKFGSFVLKSGLSSPVYIDLRGIVSRPRLLSQVADILFQTAKNAGISFDSVCGVPYTALPLATVICSANHIPMLIRRKETKDYGTKRLVEGEINPGQTCLVIEDVVTSGASVLETVEVLQKEGLKVTDAIVLLDREQGGKDKLQAQGIRLHAVCTLSQMLEILQQQEKIDADMVGRVKRFIQENVFSAANHNGLPPPEKKACKELSFGARAELPGTHPLASKLLRLMQKKETNLCLSADVSEARELLQLADALGPSICMLKTHVDILNDFTLDVMEELTALAKRHEFLIFEDRKFADIGNTVKKQYESGTFKIASWADIVNAHVVPGSGVVKGLQEVGLPLHRACLLIAEMSSAGSLATGNYTKAAVGMAEEHCEFVIGFISGSRVSMKPEFLHLTPGVQLETGGDHLGQQYNSPQEVIGKRGSDVIIVGRGILAAANRLEAAEMYRKAAWEAYLSRLAVQ.

An OPRTase region spans residues 1–214 (MEVASQALGP…VFSAANHNGL (214 aa)). Y37 is modified (phosphotyrosine). Positions 215–220 (PPPEKK) are domain linker. An OMPdecase region spans residues 221–481 (ACKELSFGAR…EAYLSRLAVQ (261 aa)). Orotidine 5'-phosphate is bound at residue S257. UMP contacts are provided by residues S257, D259, and 281–283 (KTH). Orotidine 5'-phosphate contacts are provided by residues K281, K314, D317, T321, S372, 430 to 432 (QQY), and 450 to 451 (GR). Residues K314 and D317 each act as for OMPdecase activity in the active site. Residues D317, T321, S372, 430–432 (QQY), and 450–451 (GR) each bind UMP.

In the N-terminal section; belongs to the purine/pyrimidine phosphoribosyltransferase family. It in the C-terminal section; belongs to the OMP decarboxylase family. In terms of assembly, homodimer; dimerization is required for enzymatic activity.

It catalyses the reaction orotidine 5'-phosphate + diphosphate = orotate + 5-phospho-alpha-D-ribose 1-diphosphate. The catalysed reaction is orotidine 5'-phosphate + H(+) = UMP + CO2. It functions in the pathway pyrimidine metabolism; UMP biosynthesis via de novo pathway; UMP from orotate: step 1/2. It participates in pyrimidine metabolism; UMP biosynthesis via de novo pathway; UMP from orotate: step 2/2. In terms of biological role, bifunctional enzyme catalyzing the last two steps of de novo pyrimidine biosynthesis, orotate phosphoribosyltransferase (OPRT), which converts orotate to orotidine-5'-monophosphate (OMP), and orotidine-5'-monophosphate decarboxylase (ODC), the terminal enzymatic reaction that decarboxylates OMP to uridine monophosphate (UMP). The chain is Uridine 5'-monophosphate synthase (Umps) from Mus musculus (Mouse).